Reading from the N-terminus, the 387-residue chain is 17-beta-hydroxysteroid dehydrogenase type 2 (387 aa).

The chain crosses the membrane as a helical; Signal-anchor for type II membrane protein span at residues 4–24; that stretch reads FFSDTAWICLAVPTVLCGTVF. 82–111 contacts NAD(+); that stretch reads QKAVLVTGGDCGLGHALCKYLDELGFTVFA. Position 219 (Ser219) interacts with substrate. Tyr232 is an active-site residue.

Belongs to the short-chain dehydrogenases/reductases (SDR) family. Homodimer. As to expression, expressed in placenta.

It localises to the endoplasmic reticulum membrane. The enzyme catalyses 17beta-estradiol + NAD(+) = estrone + NADH + H(+). It catalyses the reaction testosterone + NAD(+) = androst-4-ene-3,17-dione + NADH + H(+). The catalysed reaction is 17beta-hydroxy-5alpha-androstan-3-one + NAD(+) = 5alpha-androstan-3,17-dione + NADH + H(+). It carries out the reaction (20S)-hydroxypregn-4-en-3-one + NAD(+) = progesterone + NADH + H(+). Catalyzes the NAD-dependent oxidation of the highly active 17beta-hydroxysteroids, such as estradiol (E2), testosterone (T), and dihydrotestosterone (DHT), to their less active forms and thus regulates the biological potency of these steroids. Oxidizes estradiol to estrone, testosterone to androstenedione, and dihydrotestosterone to 5alpha-androstan-3,17-dione. Also has 20-alpha-HSD activity. The protein is 17-beta-hydroxysteroid dehydrogenase type 2 of Homo sapiens (Human).